Consider the following 594-residue polypeptide: Suppressor of hairless protein (594 aa).

Positions 20-87 are disordered; that stretch reads ETTVVNPNGS…QQQQQHQQQM (68 aa). Over residues 58-87 the composition is skewed to low complexity; it reads QQQQQQLQVHHQQQQQQQQQQQQQQHQQQM. DNA-binding regions lie at residues 131–141, 239–244, and 266–271; these read QKSYGNEKRFF, SKPSKK, and RLRSQT. Positions 429 to 519 constitute an IPT/TIG domain; the sequence is PIVNSLNLNG…YATGLTFTYT (91 aa). Low complexity-rich tracts occupy residues 542-562 and 569-580; these read NNNN…AGSP and QQQQQQHQALPS. The segment at 542–594 is disordered; sequence NNNNNITSISNNNNSNNAGSPAAGGGLQQQQQQHQALPSISEVQWNSHGSGLS. Positions 582 to 594 are enriched in polar residues; sequence SEVQWNSHGSGLS.

Belongs to the Su(H) family. As to quaternary structure, interacts with activated cleaved Notch. Interacts with Hairless, this interaction preventing its DNA-binding activity. Interacts with insv (via BEN domain).

It localises to the nucleus. The protein resides in the cytoplasm. Transcriptional regulator that plays a central role in Notch signaling, a signaling pathway involved in cell-cell communication that regulates a broad spectrum of cell-fate determinations. Binds directly the 5'-GTGRGAR-3' DNA consensus sequence, which is present in the regulatory region of several genes. Acts as a transcriptional repressor when it is not associated with Notch proteins. When associated with some Notch protein, it acts as a transcriptional activator that activates transcription of Notch target genes. Required for transcription of Sim. Specifically binds to the immunoglobulin kappa-type J segment recombination signal sequence. Required for neurogenesis in imaginal disks. In the larval brain, might play a role as a transducer of Notch signaling during type II neuroblast development. Also functions independently of the Notch pathway, in the development of the bristle sensory organ precursor cell. The polypeptide is Suppressor of hairless protein (Su(H)) (Drosophila melanogaster (Fruit fly)).